The sequence spans 69 residues: Large ribosomal subunit protein uL29 (69 aa).

It belongs to the universal ribosomal protein uL29 family.

The polypeptide is Large ribosomal subunit protein uL29 (Methylobacillus flagellatus (strain ATCC 51484 / DSM 6875 / VKM B-1610 / KT)).